The chain runs to 284 residues: Tryptophan 2,3-dioxygenase (284 aa).

Substrate-binding positions include 53–57, Y115, and R119; that span reads FIVQH. Residue H242 participates in heme binding. T256 provides a ligand contact to substrate.

Belongs to the tryptophan 2,3-dioxygenase family. Homotetramer. It depends on heme as a cofactor.

The catalysed reaction is L-tryptophan + O2 = N-formyl-L-kynurenine. It participates in amino-acid degradation; L-tryptophan degradation via kynurenine pathway; L-kynurenine from L-tryptophan: step 1/2. In terms of biological role, heme-dependent dioxygenase that catalyzes the oxidative cleavage of the L-tryptophan (L-Trp) pyrrole ring and converts L-tryptophan to N-formyl-L-kynurenine. Catalyzes the oxidative cleavage of the indole moiety. In Bordetella parapertussis (strain 12822 / ATCC BAA-587 / NCTC 13253), this protein is Tryptophan 2,3-dioxygenase.